The chain runs to 327 residues: Protein MRG2 (327 aa).

The segment at 1–40 is disordered; sequence MGSPNAAAETDLTTDDFIGDTRRDSGSDTETNTDCDGEDL. Residues 52-101 enclose the Tudor-knot domain; that stretch reads FEEGERVLAKHSDCFYEAKVLKVEFKDNEWKYFVHYIGWNKSWDEWIRLD. Residues 133 to 156 form a disordered region; the sequence is SKMKPRSPNVARGRKRKQDSVDTE. Residues 162 to 327 form the MRG domain; the sequence is SDNLLSFNIP…AVEEMEKKEG (166 aa).

In terms of assembly, interacts with HAM1 and HAM2. Interacts (via MRG domain) with CO. Component of the NuA4 histone acetyltransferase complex. As to expression, ubiquitous. Mainly expressed in the vasculature of cotyledons and leaves, and in roots and inflorescences.

Its subcellular location is the nucleus. Functionally, chromatin remodeling factor. Acts as a 'reader' protein by binding to H3K4me3 and H3K36me3 to control histone H4 acetylation. Increases the transcriptional levels of the flowering time genes FLC and FT. Binds the chromatin at the FT promoter upon interaction with CO. The chain is Protein MRG2 from Arabidopsis thaliana (Mouse-ear cress).